A 981-amino-acid chain; its full sequence is Peroxisomal ATPase PEX6 (981 aa).

Omega-N-methylarginine is present on arginine 119. Residues 471 to 478 (GPPGSGKT) and 745 to 752 (GPPGTGKT) each bind ATP.

It belongs to the AAA ATPase family. In terms of assembly, interacts with PEX1; forming the PEX1-PEX6 AAA ATPase complex, which is composed of a heterohexamer formed by a trimer of PEX1-PEX6 dimers. Interacts with PEX26; interaction is direct and promotes recruitment to peroxisomal membranes. Interacts with ZFAND6. In terms of tissue distribution, in the teeth, expressed in ameloblasts and odontoblasts. Expressed in the retina, at higher levels in the ganglion cell layer and photoreceptor layer at the joint between the outer and inner segments.

It is found in the cytoplasm. The protein resides in the cytosol. The protein localises to the peroxisome membrane. Its subcellular location is the cell projection. It localises to the cilium. It is found in the photoreceptor outer segment. The catalysed reaction is ATP + H2O = ADP + phosphate + H(+). In terms of biological role, component of the PEX1-PEX6 AAA ATPase complex, a protein dislocase complex that mediates the ATP-dependent extraction of the PEX5 receptor from peroxisomal membranes, an essential step for PEX5 recycling. Specifically recognizes PEX5 monoubiquitinated at 'Cys-11', and pulls it out of the peroxisome lumen through the PEX2-PEX10-PEX12 retrotranslocation channel. Extraction by the PEX1-PEX6 AAA ATPase complex is accompanied by unfolding of the TPR repeats and release of bound cargo from PEX5. This Mus musculus (Mouse) protein is Peroxisomal ATPase PEX6.